Reading from the N-terminus, the 248-residue chain is uncharacterized protein (248 aa).

The protein to M.jannaschii MJ1452.

This is an uncharacterized protein from Methanothermobacter thermautotrophicus (strain ATCC 29096 / DSM 1053 / JCM 10044 / NBRC 100330 / Delta H) (Methanobacterium thermoautotrophicum).